Reading from the N-terminus, the 1145-residue chain is Error-prone DNA polymerase (1145 aa).

The protein belongs to the DNA polymerase type-C family. DnaE2 subfamily.

The protein resides in the cytoplasm. It catalyses the reaction DNA(n) + a 2'-deoxyribonucleoside 5'-triphosphate = DNA(n+1) + diphosphate. Functionally, DNA polymerase involved in damage-induced mutagenesis and translesion synthesis (TLS). It is not the major replicative DNA polymerase. This chain is Error-prone DNA polymerase, found in Rhodopirellula baltica (strain DSM 10527 / NCIMB 13988 / SH1).